The sequence spans 102 residues: Small ribosomal subunit protein eS24 (102 aa).

The protein belongs to the eukaryotic ribosomal protein eS24 family.

This Methanobrevibacter smithii (strain ATCC 35061 / DSM 861 / OCM 144 / PS) protein is Small ribosomal subunit protein eS24.